The sequence spans 170 residues: Cathelicidin antimicrobial peptide (170 aa).

Positions 1–30 are cleaved as a signal peptide; that stretch reads MKTQRDGPSLGRWSLVLLLLGLVMPLAIVA. The propeptide at 31-131 is cathelin-like domain (CLD); it reads QVLSYQEAVL…DISCDKDNRR (101 aa). 2 cysteine pairs are disulfide-bonded: cysteine 86/cysteine 97 and cysteine 108/cysteine 125. Residues 150 to 162 are active core; it reads LKKIGQKIKDFLG.

This sequence belongs to the cathelicidin family. In terms of assembly, monomer, homodimer or homotrimer (in vitro). Oligomerizes as tetra- or hexamer in solution (in vitro). In terms of processing, proteolytically cleaved by proteinase PRTN3 into antibacterial peptide LL-37. Proteolytically cleaved by cathepsin CTSG and neutrophil elastase ELANE. Resistant to proteolytic degradation in solution, and when bound to both zwitterionic (mimicking mammalian membranes) and negatively charged membranes (mimicking bacterial membranes). Post-translationally, after secretion onto the skin surface, the CAMP gene product is processed by a serine protease-dependent mechanism into multiple novel antimicrobial peptides distinct from and shorter than cathelicidin LL-37. These peptides show enhanced antimicrobial action, acquiring the ability to kill skin pathogens such as S.aureus, E.coli and C.albicans. These peptides have lost the ability to stimulate CXCL8/IL8 release from keratinocytes. The peptides act synergistically, killing bacteria at lower concentrations when present together, and maintain activity at increased salt condition.

The protein localises to the secreted. It is found in the vesicle. Functionally, antimicrobial protein that is an integral component of the innate immune system. Binds to bacterial lipopolysaccharides (LPS). Acts via neutrophil N-formyl peptide receptors to enhance the release of CXCL2. Postsecretory processing generates multiple cathelicidin antimicrobial peptides with various lengths which act as a topical antimicrobial defense in sweat on skin. The unprocessed precursor form, cathelicidin antimicrobial peptide, inhibits the growth of Gram-negative E.coli and E.aerogenes with efficiencies comparable to that of the mature peptide LL-37 (in vitro). Antimicrobial peptide that is an integral component of the innate immune system. Binds to bacterial lipopolysaccharides (LPS). Causes membrane permeabilization by forming transmembrane pores (in vitro). Causes lysis of E.coli. Exhibits antimicrobial activity against Gram-negative bacteria such as P.aeruginosa, S.typhimurium, E.aerogenes, E.coli and P.syringae, Gram-positive bacteria such as L.monocytogenes, S.epidermidis, S.pyogenes and S.aureus, as well as vancomycin-resistant enterococci (in vitro). Exhibits antimicrobial activity against methicillin-resistant S.aureus, P.mirabilis, and C.albicans in low-salt media, but not in media containing 100 mM NaCl (in vitro). Forms chiral supramolecular assemblies with quinolone signal (PQS) molecules of P.aeruginosa, which may lead to interference of bacterial quorum signaling and perturbance of bacterial biofilm formation. May form supramolecular fiber-like assemblies on bacterial membranes. Induces cytokine and chemokine producation as well as TNF/TNFA and CSF2/GMCSF production in normal human keratinocytes. Exhibits hemolytic activity against red blood cells. Its function is as follows. Exhibits antimicrobial activity against E.coli and B.megaterium (in vitro). The chain is Cathelicidin antimicrobial peptide from Chlorocebus aethiops (Green monkey).